The primary structure comprises 567 residues: Phosphoglucomutase-like protein 5 (567 aa).

The disordered stretch occupies residues 1–26; the sequence is MEGSPIPVLTVPTAPYEDQRPAGGGG. Thr120 carries the phosphothreonine modification. Residue Ser122 is modified to Phosphoserine.

It belongs to the phosphohexose mutase family. Interacts with DMD/dystrophin; the interaction is direct. Interacts with UTRN/utrophin. As to expression, detected in smooth and cardiac muscle at high levels and in skeletal muscle at low level. Present in other tissues due to vascular or other smooth muscle component. Low levels are present in liver, kidney, skin and brain (at protein level).

The protein localises to the cell junction. It localises to the adherens junction. The protein resides in the cytoplasm. Its subcellular location is the cytoskeleton. It is found in the cell membrane. The protein localises to the sarcolemma. Its function is as follows. Component of adherens-type cell-cell and cell-matrix junctions. Has no phosphoglucomutase activity in vitro. This Homo sapiens (Human) protein is Phosphoglucomutase-like protein 5.